Consider the following 95-residue polypeptide: Small ribosomal subunit protein uS19 (95 aa).

The protein belongs to the universal ribosomal protein uS19 family.

Functionally, protein S19 forms a complex with S13 that binds strongly to the 16S ribosomal RNA. This Lactobacillus gasseri (strain ATCC 33323 / DSM 20243 / BCRC 14619 / CIP 102991 / JCM 1131 / KCTC 3163 / NCIMB 11718 / NCTC 13722 / AM63) protein is Small ribosomal subunit protein uS19.